Here is a 147-residue protein sequence, read N- to C-terminus: Diuretic hormone 45 (147 aa).

The signal sequence occupies residues 1 to 26 (MMWWAVWCAAMVAGSVFTAAAPPTDS). The propeptide occupies 27–84 (IDLMQMDPSLADDESLGFAMQSLSGRYAAAPWLYLLADVSHDPQRMAEFSQSSGRARP). Position 131 is a valine amide (valine 131). Positions 135 to 147 (GAWGEPASYLYNN) are excised as a propeptide.

Belongs to the sauvagine/corticotropin-releasing factor/urotensin I family.

It is found in the secreted. Regulation of fluid secretion. This Bombyx mori (Silk moth) protein is Diuretic hormone 45 (dh45).